The chain runs to 42 residues: Kappa-actitoxin-Ael2a (42 aa).

Disulfide bonds link Cys4-Cys37, Cys6-Cys30, and Cys20-Cys38.

The protein belongs to the sea anemone type 3 (BDS) potassium channel toxin family.

Its subcellular location is the secreted. It localises to the nematocyst. Functionally, peptide with both antimicrobial and neurotoxin activities. This toxin acts both on ERG potassium channels and sodium channels. It potently and reversibly inhibits human Kv11.1/KCNH2/ERG1 (IC(50)=34 nM), rat Kv11.1/KCNH2/ERG1 and Kv11.3/KCNH7/ERG3 voltage-gated potassium channels in a similar potency. It acts as a gating-modifier toxin that shifts the voltage-dependence of ERG activation in the positive direction and suppresses its current amplitudes elicited by strong depolarizing pulses. On sodium channels, it blocks Nav1.2/SCN2A (EC(50)=31 nM), Nav1.3/SCN3A, Nav1.4/SCN4A, Nav1.5/SCN5A, Nav1.6/SCN8A, Nav1.8/SCN10A (EC(50)=92 nM). It may act by binding at site 1 or close by, only when the pore is in an open configuration. Shows antibacterial activity against the Gram-negative bacterium S.typhimurium, but not on the bacteria B.subtilis, S.aureus, and P.aeruginosa. In vivo, this toxin does not induce neurotoxic symptoms when injected into mice. In Anthopleura elegantissima (Green aggregating anemone), this protein is Kappa-actitoxin-Ael2a.